We begin with the raw amino-acid sequence, 433 residues long: Serine hydroxymethyltransferase (433 aa).

Residues Leu132 and 136-138 (GHL) each bind (6S)-5,6,7,8-tetrahydrofolate. Lys241 is modified (N6-(pyridoxal phosphate)lysine).

The protein belongs to the SHMT family. As to quaternary structure, homodimer. Pyridoxal 5'-phosphate serves as cofactor.

It is found in the cytoplasm. The enzyme catalyses (6R)-5,10-methylene-5,6,7,8-tetrahydrofolate + glycine + H2O = (6S)-5,6,7,8-tetrahydrofolate + L-serine. Its pathway is one-carbon metabolism; tetrahydrofolate interconversion. It functions in the pathway amino-acid biosynthesis; glycine biosynthesis; glycine from L-serine: step 1/1. Functionally, catalyzes the reversible interconversion of serine and glycine with tetrahydrofolate (THF) serving as the one-carbon carrier. This reaction serves as the major source of one-carbon groups required for the biosynthesis of purines, thymidylate, methionine, and other important biomolecules. Also exhibits THF-independent aldolase activity toward beta-hydroxyamino acids, producing glycine and aldehydes, via a retro-aldol mechanism. This is Serine hydroxymethyltransferase from Bradyrhizobium sp. (strain ORS 278).